Consider the following 691-residue polypeptide: Elongation factor G (691 aa).

In terms of domain architecture, tr-type G spans 8–283 (EDYRNIGIMA…AVVDFLPSPL (276 aa)). Residues 17 to 24 (AHIDAGKT), 81 to 85 (DTPGH), and 135 to 138 (NKMD) contribute to the GTP site.

Belongs to the TRAFAC class translation factor GTPase superfamily. Classic translation factor GTPase family. EF-G/EF-2 subfamily.

It localises to the cytoplasm. In terms of biological role, catalyzes the GTP-dependent ribosomal translocation step during translation elongation. During this step, the ribosome changes from the pre-translocational (PRE) to the post-translocational (POST) state as the newly formed A-site-bound peptidyl-tRNA and P-site-bound deacylated tRNA move to the P and E sites, respectively. Catalyzes the coordinated movement of the two tRNA molecules, the mRNA and conformational changes in the ribosome. In Parvibaculum lavamentivorans (strain DS-1 / DSM 13023 / NCIMB 13966), this protein is Elongation factor G.